A 24-amino-acid chain; its full sequence is N-acyl-L-amino acid amidohydrolase (24 aa).

This sequence belongs to the peptidase M20 family. In terms of assembly, homotetramer. The cofactor is Co(2+).

It catalyses the reaction an N-acyl-L-amino acid + H2O = an L-alpha-amino acid + a carboxylate. The catalysed reaction is an N-acetyl-L-cysteine-S-conjugate + H2O = an S-substituted L-cysteine + acetate. The chain is N-acyl-L-amino acid amidohydrolase from Parageobacillus thermoglucosidasius (Geobacillus thermoglucosidasius).